The chain runs to 388 residues: Chalcone synthase LF3 (388 aa).

The active site involves cysteine 164.

Belongs to the thiolase-like superfamily. Chalcone/stilbene synthases family.

The catalysed reaction is (E)-4-coumaroyl-CoA + 3 malonyl-CoA + 3 H(+) = 2',4,4',6'-tetrahydroxychalcone + 3 CO2 + 4 CoA. Its pathway is secondary metabolite biosynthesis; flavonoid biosynthesis. In terms of biological role, the primary product of this enzyme is 4,2',4',6'-tetrahydroxychalcone (also termed naringenin-chalcone or chalcone) which can under specific conditions spontaneously isomerize into naringenin. The protein is Chalcone synthase LF3 (CHS-LF3) of Ipomoea batatas (Sweet potato).